The following is a 296-amino-acid chain: tRNA U34 carboxymethyltransferase (296 aa).

Carboxy-S-adenosyl-L-methionine contacts are provided by residues lysine 64, tryptophan 78, lysine 83, glycine 102, 124-126, 151-152, tyrosine 171, and arginine 286; these read DPS and VE.

The protein belongs to the class I-like SAM-binding methyltransferase superfamily. CmoB family. In terms of assembly, homotetramer.

The enzyme catalyses carboxy-S-adenosyl-L-methionine + 5-hydroxyuridine(34) in tRNA = 5-carboxymethoxyuridine(34) in tRNA + S-adenosyl-L-homocysteine + H(+). In terms of biological role, catalyzes carboxymethyl transfer from carboxy-S-adenosyl-L-methionine (Cx-SAM) to 5-hydroxyuridine (ho5U) to form 5-carboxymethoxyuridine (cmo5U) at position 34 in tRNAs. This chain is tRNA U34 carboxymethyltransferase, found in Sulfurimonas denitrificans (strain ATCC 33889 / DSM 1251) (Thiomicrospira denitrificans (strain ATCC 33889 / DSM 1251)).